The following is an 82-amino-acid chain: RNA-binding protein Hfq (82 aa).

The region spanning 11–71 (DTFLNHVRKT…ISTIMPGAPI (61 aa)) is the Sm domain.

It belongs to the Hfq family. In terms of assembly, homohexamer.

Its function is as follows. RNA chaperone that binds small regulatory RNA (sRNAs) and mRNAs to facilitate mRNA translational regulation in response to envelope stress, environmental stress and changes in metabolite concentrations. Also binds with high specificity to tRNAs. The chain is RNA-binding protein Hfq from Rhodopseudomonas palustris (strain BisA53).